We begin with the raw amino-acid sequence, 456 residues long: Serine--tRNA ligase (456 aa).

Disordered stretches follow at residues 107-130 (PHSSVPEGRSESDNREVRRWGTPP) and 229-253 (FLENQPVAATLPSNSNSPQGGQDDD). Residues 114–125 (GRSESDNREVRR) show a composition bias toward basic and acidic residues. The span at 239–248 (LPSNSNSPQG) shows a compositional bias: polar residues. Position 260–262 (260–262 (TSE)) interacts with L-serine. An ATP-binding site is contributed by 291 to 293 (RSE). E314 contacts L-serine. Residue 378 to 381 (EISS) participates in ATP binding. Residue S413 coordinates L-serine.

The protein belongs to the class-II aminoacyl-tRNA synthetase family. Type-1 seryl-tRNA synthetase subfamily. Homodimer. The tRNA molecule binds across the dimer.

It is found in the cytoplasm. The catalysed reaction is tRNA(Ser) + L-serine + ATP = L-seryl-tRNA(Ser) + AMP + diphosphate + H(+). It carries out the reaction tRNA(Sec) + L-serine + ATP = L-seryl-tRNA(Sec) + AMP + diphosphate + H(+). It functions in the pathway aminoacyl-tRNA biosynthesis; selenocysteinyl-tRNA(Sec) biosynthesis; L-seryl-tRNA(Sec) from L-serine and tRNA(Sec): step 1/1. Functionally, catalyzes the attachment of serine to tRNA(Ser). Is also able to aminoacylate tRNA(Sec) with serine, to form the misacylated tRNA L-seryl-tRNA(Sec), which will be further converted into selenocysteinyl-tRNA(Sec). The chain is Serine--tRNA ligase from Nitrosospira multiformis (strain ATCC 25196 / NCIMB 11849 / C 71).